Reading from the N-terminus, the 449-residue chain is Glucose-6-phosphate isomerase (449 aa).

Glu291 serves as the catalytic Proton donor. Residues His312 and Lys426 contribute to the active site.

It belongs to the GPI family.

Its subcellular location is the cytoplasm. The catalysed reaction is alpha-D-glucose 6-phosphate = beta-D-fructose 6-phosphate. It functions in the pathway carbohydrate biosynthesis; gluconeogenesis. It participates in carbohydrate degradation; glycolysis; D-glyceraldehyde 3-phosphate and glycerone phosphate from D-glucose: step 2/4. In terms of biological role, catalyzes the reversible isomerization of glucose-6-phosphate to fructose-6-phosphate. The sequence is that of Glucose-6-phosphate isomerase from Streptococcus pyogenes serotype M5 (strain Manfredo).